A 708-amino-acid chain; its full sequence is Leukotoxin translocation ATP-binding protein LktB (708 aa).

Residues 1 to 126 (MEANHQRNDL…ACYQGQLILV (126 aa)) enclose the Peptidase C39 domain. In terms of domain architecture, ABC transmembrane type-1 spans 155 to 437 (FLETLIVSIF…LAQLWQDFQQ (283 aa)). 5 consecutive transmembrane segments (helical) span residues 159–179 (LIVS…FQVV), 192–212 (LNII…LSGL), 270–290 (ALTS…MWYY), 296–316 (LVIL…SPIL), and 389–409 (VMVI…LSIG). The ABC transporter domain occupies 469–704 (IAFKNIRFRY…SNGLYSYLHQ (236 aa)). 503-510 (GRSGSGKS) serves as a coordination point for ATP.

It belongs to the ABC transporter superfamily. Protein-1 exporter (TC 3.A.1.109) family. Homodimer.

The protein resides in the cell inner membrane. The enzyme catalyses ATP + H2O + proteinSide 1 = ADP + phosphate + proteinSide 2.. In terms of biological role, part of the ABC transporter complex LktBD involved in leukotoxin export. Transmembrane domains (TMD) form a pore in the inner membrane and the ATP-binding domain (NBD) is responsible for energy generation. The protein is Leukotoxin translocation ATP-binding protein LktB (lktB) of Mannheimia glucosida.